A 627-amino-acid chain; its full sequence is Serine/threonine-protein phosphatase 2A 56 kDa regulatory subunit delta 2 isoform (627 aa).

The interval 1-37 (MKGLRSKFVKALSLKDEQGSHKNGHSKSHYISKNGSY) is disordered.

This sequence belongs to the phosphatase 2A regulatory subunit B family. PP2A consists of a common heterodimeric core enzyme, composed of a 36 kDa catalytic subunit (subunit C) and a 65 kDa constant regulatory subunit (PR65 or subunit A), that associates with a variety of regulatory subunits. Proteins that associate with the core dimer include three families of regulatory subunits B (the R2/B/PR55/B55, R3/B''/PR72/PR130/PR59 and R5/B'/B56 families), the 48 kDa variable regulatory subunit, viral proteins, and cell signaling molecules.

The protein resides in the cytoplasm. The protein localises to the cell tip. Functionally, the B regulatory subunit might modulate substrate selectivity and catalytic activity, and might also direct the localization of the catalytic enzyme to a particular subcellular compartment. Has a role in cell shape control and septum formation. The polypeptide is Serine/threonine-protein phosphatase 2A 56 kDa regulatory subunit delta 2 isoform (par2) (Schizosaccharomyces pombe (strain 972 / ATCC 24843) (Fission yeast)).